Here is a 274-residue protein sequence, read N- to C-terminus: Imidazole glycerol phosphate synthase subunit HisF (274 aa).

Residues aspartate 11 and aspartate 134 contribute to the active site.

Belongs to the HisA/HisF family. In terms of assembly, heterodimer of HisH and HisF.

Its subcellular location is the cytoplasm. The enzyme catalyses 5-[(5-phospho-1-deoxy-D-ribulos-1-ylimino)methylamino]-1-(5-phospho-beta-D-ribosyl)imidazole-4-carboxamide + L-glutamine = D-erythro-1-(imidazol-4-yl)glycerol 3-phosphate + 5-amino-1-(5-phospho-beta-D-ribosyl)imidazole-4-carboxamide + L-glutamate + H(+). Its pathway is amino-acid biosynthesis; L-histidine biosynthesis; L-histidine from 5-phospho-alpha-D-ribose 1-diphosphate: step 5/9. Its function is as follows. IGPS catalyzes the conversion of PRFAR and glutamine to IGP, AICAR and glutamate. The HisF subunit catalyzes the cyclization activity that produces IGP and AICAR from PRFAR using the ammonia provided by the HisH subunit. In Methanosphaera stadtmanae (strain ATCC 43021 / DSM 3091 / JCM 11832 / MCB-3), this protein is Imidazole glycerol phosphate synthase subunit HisF.